Here is a 227-residue protein sequence, read N- to C-terminus: Phosphoribosylformylglycinamidine synthase subunit PurQ (227 aa).

The Glutamine amidotransferase type-1 domain maps to 2–226 (KFAVIQFPGS…VKAWKEEQVN (225 aa)). The active-site Nucleophile is the Cys86. Catalysis depends on residues His195 and Glu197.

In terms of assembly, part of the FGAM synthase complex composed of 1 PurL, 1 PurQ and 2 PurS subunits.

Its subcellular location is the cytoplasm. The enzyme catalyses N(2)-formyl-N(1)-(5-phospho-beta-D-ribosyl)glycinamide + L-glutamine + ATP + H2O = 2-formamido-N(1)-(5-O-phospho-beta-D-ribosyl)acetamidine + L-glutamate + ADP + phosphate + H(+). It carries out the reaction L-glutamine + H2O = L-glutamate + NH4(+). It participates in purine metabolism; IMP biosynthesis via de novo pathway; 5-amino-1-(5-phospho-D-ribosyl)imidazole from N(2)-formyl-N(1)-(5-phospho-D-ribosyl)glycinamide: step 1/2. Its function is as follows. Part of the phosphoribosylformylglycinamidine synthase complex involved in the purines biosynthetic pathway. Catalyzes the ATP-dependent conversion of formylglycinamide ribonucleotide (FGAR) and glutamine to yield formylglycinamidine ribonucleotide (FGAM) and glutamate. The FGAM synthase complex is composed of three subunits. PurQ produces an ammonia molecule by converting glutamine to glutamate. PurL transfers the ammonia molecule to FGAR to form FGAM in an ATP-dependent manner. PurS interacts with PurQ and PurL and is thought to assist in the transfer of the ammonia molecule from PurQ to PurL. This Listeria monocytogenes serotype 4b (strain CLIP80459) protein is Phosphoribosylformylglycinamidine synthase subunit PurQ.